An 85-amino-acid polypeptide reads, in one-letter code: Large ribosomal subunit protein bL27 (85 aa).

Residues 1-22 are disordered; sequence MAHKKAGGSTRNGRDSESKRLG.

It belongs to the bacterial ribosomal protein bL27 family.

This Aliivibrio fischeri (strain ATCC 700601 / ES114) (Vibrio fischeri) protein is Large ribosomal subunit protein bL27.